A 176-amino-acid chain; its full sequence is ADP-ribosylation factor-like protein 8d (176 aa).

GTP-binding positions include 21–26 (NSGKTS), 40–43 (MIPT), 62–66 (DLGGQ), and 121–124 (NKID).

This sequence belongs to the small GTPase superfamily. Arf family. As to quaternary structure, interacts with tubulin.

It localises to the late endosome membrane. It is found in the lysosome membrane. Its subcellular location is the cytoplasm. The protein resides in the cytoskeleton. The protein localises to the spindle. In terms of biological role, may play a role in lysosome motility. May play a role in chromosome segregation. The protein is ADP-ribosylation factor-like protein 8d of Arabidopsis thaliana (Mouse-ear cress).